We begin with the raw amino-acid sequence, 300 residues long: Pantothenate synthetase (300 aa).

Position 30–37 (30–37 (MGYLHEGH)) interacts with ATP. Catalysis depends on histidine 37, which acts as the Proton donor. (R)-pantoate is bound at residue glutamine 61. Glutamine 61 is a beta-alanine binding site. Residue 147–150 (GMKD) participates in ATP binding. Glutamine 153 is a binding site for (R)-pantoate. ATP contacts are provided by residues valine 176 and 184-187 (KSSR).

Belongs to the pantothenate synthetase family. In terms of assembly, homodimer.

It is found in the cytoplasm. The catalysed reaction is (R)-pantoate + beta-alanine + ATP = (R)-pantothenate + AMP + diphosphate + H(+). It functions in the pathway cofactor biosynthesis; (R)-pantothenate biosynthesis; (R)-pantothenate from (R)-pantoate and beta-alanine: step 1/1. Functionally, catalyzes the condensation of pantoate with beta-alanine in an ATP-dependent reaction via a pantoyl-adenylate intermediate. The chain is Pantothenate synthetase from Geobacillus kaustophilus (strain HTA426).